The primary structure comprises 863 residues: Leucine--tRNA ligase (863 aa).

The 'HIGH' region signature appears at 42-52 (PYPSGRLHMGH). The 'KMSKS' region motif lies at 622-626 (KMSKS). An ATP-binding site is contributed by Lys625.

It belongs to the class-I aminoacyl-tRNA synthetase family.

It is found in the cytoplasm. The catalysed reaction is tRNA(Leu) + L-leucine + ATP = L-leucyl-tRNA(Leu) + AMP + diphosphate. In Shewanella frigidimarina (strain NCIMB 400), this protein is Leucine--tRNA ligase.